The chain runs to 104 residues: DNA-directed RNA polymerase subunit omega (104 aa).

The protein belongs to the RNA polymerase subunit omega family. The RNAP catalytic core consists of 2 alpha, 1 beta, 1 beta' and 1 omega subunit. When a sigma factor is associated with the core the holoenzyme is formed, which can initiate transcription.

It carries out the reaction RNA(n) + a ribonucleoside 5'-triphosphate = RNA(n+1) + diphosphate. Promotes RNA polymerase assembly. Latches the N- and C-terminal regions of the beta' subunit thereby facilitating its interaction with the beta and alpha subunits. This Streptococcus pyogenes serotype M1 protein is DNA-directed RNA polymerase subunit omega (rpoZ).